A 387-amino-acid chain; its full sequence is 1-deoxy-D-xylulose 5-phosphate reductoisomerase (387 aa).

Residues Thr11, Gly12, Ser13, Ile14, Gly37, Arg38, Asn39, and Asn125 each coordinate NADPH. Lys126 is a 1-deoxy-D-xylulose 5-phosphate binding site. Position 127 (Glu127) interacts with NADPH. Asp151 is a binding site for Mn(2+). Ser152, Glu153, Ser177, and His200 together coordinate 1-deoxy-D-xylulose 5-phosphate. Mn(2+) is bound at residue Glu153. Gly206 serves as a coordination point for NADPH. Residues Ser213, Asn218, Lys219, and Glu222 each contribute to the 1-deoxy-D-xylulose 5-phosphate site. Glu222 is a binding site for Mn(2+).

The protein belongs to the DXR family. Mg(2+) serves as cofactor. Mn(2+) is required as a cofactor.

The enzyme catalyses 2-C-methyl-D-erythritol 4-phosphate + NADP(+) = 1-deoxy-D-xylulose 5-phosphate + NADPH + H(+). Its pathway is isoprenoid biosynthesis; isopentenyl diphosphate biosynthesis via DXP pathway; isopentenyl diphosphate from 1-deoxy-D-xylulose 5-phosphate: step 1/6. Catalyzes the NADPH-dependent rearrangement and reduction of 1-deoxy-D-xylulose-5-phosphate (DXP) to 2-C-methyl-D-erythritol 4-phosphate (MEP). This Desulforamulus reducens (strain ATCC BAA-1160 / DSM 100696 / MI-1) (Desulfotomaculum reducens) protein is 1-deoxy-D-xylulose 5-phosphate reductoisomerase.